A 138-amino-acid chain; its full sequence is MAKAIPRSGSRRSGRIGSRKSTRRIPKGVIHVQASFNNTIVTVTDVRGRVVSWSSAGTCGFKGTRRGTPFAAQTAAGNAIRTVVDQGMQRAEVMIKGPGLGRDAALRAIRRSGILLTFVRDVTPMPHNGCRPPKKRRV.

The tract at residues 1–24 (MAKAIPRSGSRRSGRIGSRKSTRR) is disordered. The segment covering 9-24 (GSRRSGRIGSRKSTRR) has biased composition (basic residues).

It belongs to the universal ribosomal protein uS11 family. As to quaternary structure, part of the 30S ribosomal subunit.

Its subcellular location is the plastid. The protein resides in the chloroplast. The sequence is that of Small ribosomal subunit protein uS11c from Panax ginseng (Korean ginseng).